Consider the following 449-residue polypeptide: Protein translocase subunit SecD (449 aa).

A run of 6 helical transmembrane segments spans residues 6 to 26 (GLVFLAILAAMILAFTIVLPT), 272 to 292 (LAVKAGLVGIILVMIFMIAFY), 294 to 314 (LPGLLASIALVFYGVIVLALF), 317 to 337 (VPVTLTLAGIGGFIVSAGMAV), 379 to 399 (TFIACGILFWVGGTIAAGAPV), and 401 to 421 (GFAVTLFLGVAVSMFTAIFVT).

Belongs to the SecD/SecF family. SecD subfamily. As to quaternary structure, forms a complex with SecF. Part of the essential Sec protein translocation apparatus which comprises SecA, SecYEG and auxiliary proteins SecDF. Other proteins may also be involved.

Its subcellular location is the cell membrane. Part of the Sec protein translocase complex. Interacts with the SecYEG preprotein conducting channel. SecDF uses the proton motive force (PMF) to complete protein translocation after the ATP-dependent function of SecA. The chain is Protein translocase subunit SecD from Dehalococcoides mccartyi (strain VS).